We begin with the raw amino-acid sequence, 27 residues long: SCNNSCQQHSQCASHCVCLLNKCRTVN.

Intrachain disulfides connect Cys-2–Cys-16, Cys-6–Cys-18, and Cys-12–Cys-23. Asn-27 bears the Asparagine amide mark.

As to expression, expressed by the venom duct.

It localises to the secreted. In terms of biological role, probable neurotoxin that inhibits ion channels. This Conus amadis (Amadis cone) protein is Conotoxin.